The primary structure comprises 572 residues: NADP-dependent malic enzyme (572 aa).

Methionine 1 bears the N-acetylmethionine mark. Residue tyrosine 102 is the Proton donor of the active site. Residue arginine 155 coordinates NADP(+). The Proton acceptor role is filled by lysine 173. A divalent metal cation is bound by residues glutamate 245, aspartate 246, and aspartate 269. NADP(+) is bound by residues aspartate 269 and 301–318 (GAGE…MAME). Position 336 is a phosphoserine (serine 336).

It belongs to the malic enzymes family. In terms of assembly, homotetramer. Requires Mg(2+) as cofactor. The cofactor is Mn(2+).

The protein localises to the cytoplasm. The enzyme catalyses (S)-malate + NADP(+) = pyruvate + CO2 + NADPH. The catalysed reaction is oxaloacetate + H(+) = pyruvate + CO2. Its function is as follows. Catalyzes the oxidative decarboxylation of (S)-malate in the presence of NADP(+) and divalent metal ions, and decarboxylation of oxaloacetate. This chain is NADP-dependent malic enzyme (Me1), found in Mus musculus (Mouse).